A 326-amino-acid polypeptide reads, in one-letter code: ELAV-like protein 1 (326 aa).

RRM domains lie at Thr20–Pro98, Ala106–Asn186, and Trp244–Ser322.

Belongs to the RRM elav family. In terms of assembly, interacts (via RRM3) with cirbp. Unable to form oligomers. Part of a ribonucleoprotein (RNP) complex, at least composed of elavl1/elrA and/or elavl2/elrB, igf2bp3/vg1RBP, ddx6/Xp54, ybx2/frgy2, lsm14b/rap55b and, in a subset of RNP complexes, stau1/staufen.

It localises to the cytoplasm. The protein resides in the cell cortex. In terms of biological role, RNA-binding protein that binds to the 3'-UTR region of mRNAs and increases their stability. Involved in embryonic stem cells (ESCs) differentiation: preferentially binds mRNAs that are not methylated by N6-methyladenosine (m6A), stabilizing them, promoting ESCs differentiation. Binds to poly-U elements and AU-rich elements (AREs) in the 3'-UTR of target mRNAs. Acts cooperatively with cribp to stabilize AU-rich sequence (ARE)-containing mRNAs. May play a role during gastrulation. Required for the vegetal localization of vg1 mRNA. This Xenopus tropicalis (Western clawed frog) protein is ELAV-like protein 1.